Consider the following 298-residue polypeptide: Mitochondrial substrate carrier family protein N (298 aa).

Over 1–13 (MAGDLTPSLFLKY) the chain is Mitochondrial intermembrane. 3 Solcar repeats span residues 8–92 (SLFL…FKKT), 104–188 (FRIP…TAEN), and 207–290 (QKLS…IKQM). A helical membrane pass occupies residues 14 to 34 (GFGGALSCSITHSLVVPLDVV). Topologically, residues 35 to 60 (KTLLQTNPGKYTGMMNGFSTVIKEQG) are mitochondrial matrix. A helical membrane pass occupies residues 61–81 (PSGLLQGLGPTAVGYALQGFL). Residues 82–105 (KFGFYEVFKKTYADAVGEKADQFR) are Mitochondrial intermembrane-facing. A helical membrane pass occupies residues 106 to 126 (IPIWLAASATAEVIADIALCP). The Mitochondrial matrix portion of the chain corresponds to 127 to 162 (NEAVRIRLVAEPTFAKSPVEAFGKIFKQEGVLGFYK). Residues 163 to 179 (GLPPILLKQVPYTMAKF) form a helical membrane-spanning segment. Residues 180 to 208 (AVFEFTAENVYKGLAASGKPKESLTDGQK) are Mitochondrial intermembrane-facing. The helical transmembrane segment at 209 to 229 (LSVSLGSGIVAGIVAAIVSQP) threads the bilayer. Topologically, residues 230–262 (ADTILSKINQEKTDGGVVKAIGNIMRRLGVRGL) are mitochondrial matrix. A helical membrane pass occupies residues 263 to 283 (FLGLPTRCFMVGTLTAGQFFI). At 284–298 (YDGIKQMLGLTPAKK) the chain is on the mitochondrial intermembrane side.

The protein belongs to the mitochondrial carrier (TC 2.A.29) family.

It localises to the mitochondrion inner membrane. Functionally, mitochondrial solute carriers shuttle metabolites, nucleotides, and cofactors through the mitochondrial inner membrane. Transports phosphate groups from the cytosol to the mitochondrial matrix. Phosphate is cotransported with H(+). This is Mitochondrial substrate carrier family protein N (mcfN) from Dictyostelium discoideum (Social amoeba).